We begin with the raw amino-acid sequence, 184 residues long: Ribosome maturation factor RimM (184 aa).

The PRC barrel domain occupies 106–184; that stretch reads PGDYYWYQLE…RMIVDWDPEF (79 aa).

It belongs to the RimM family. As to quaternary structure, binds ribosomal protein uS19.

The protein localises to the cytoplasm. In terms of biological role, an accessory protein needed during the final step in the assembly of 30S ribosomal subunit, possibly for assembly of the head region. Essential for efficient processing of 16S rRNA. May be needed both before and after RbfA during the maturation of 16S rRNA. It has affinity for free ribosomal 30S subunits but not for 70S ribosomes. This Chromohalobacter salexigens (strain ATCC BAA-138 / DSM 3043 / CIP 106854 / NCIMB 13768 / 1H11) protein is Ribosome maturation factor RimM.